A 1346-amino-acid polypeptide reads, in one-letter code: Zinc finger protein 541 (1346 aa).

2 disordered regions span residues 1 to 34 (MDQY…DTLN) and 113 to 136 (EADE…SSPQ). Positions 21–32 (FSESQGLNCSDT) are enriched in polar residues. 3 C2H2-type zinc fingers span residues 140–162 (LDCS…YLTH), 168–190 (HVCK…MLTH), and 196–220 (FVCI…YEVH). Disordered regions lie at residues 235 to 271 (ACGD…LLPH), 283 to 328 (VHQK…AAPA), 437 to 472 (SAVP…EDAL), and 578 to 744 (SQLP…GGYR). Composition is skewed to low complexity over residues 294–323 (PAGA…PAGP) and 440–458 (PSRE…SPSE). The segment covering 671 to 685 (PDISSLAKQLRSSKG) has biased composition (polar residues). The segment at 838 to 860 (FVCKNCSQMFYTEKGLSSHMCFH) adopts a C2H2-type 4 zinc-finger fold. The segment at 931–971 (AMGQEKDGEERDSKESSQQRKRKKRPPPSTAGEPGPAGCHQ) is disordered. Residues 934-948 (QEKDGEERDSKESSQ) show a composition bias toward basic and acidic residues. Residues 1053–1145 (PHINIGSRFQ…VALETLLLRG (93 aa)) form the ELM2 domain. One can recognise an SANT domain in the interval 1160-1211 (TGSDVWTPIEKRLFKKAFYAHKKDFYLIHKMIQTKTVAQCVEYYYIWKKMIK). Residues 1224 to 1281 (VKREPEEVERTEEKVPCSPRERPSHHPTPKLKTKSYRRESILSSSPNAGSKRTPELLG) are disordered. Over residues 1234-1247 (TEEKVPCSPRERPS) the composition is skewed to basic and acidic residues. Residues 1248-1258 (HHPTPKLKTKS) show a composition bias toward basic residues. A compositionally biased stretch (polar residues) spans 1264–1273 (ILSSSPNAGS). The C2H2-type 5 zinc finger occupies 1289–1311 (FPCRECERVFDKIKSRNAHMKRH).

In terms of assembly, interacts with DNTTIP1. Identified in a complex with KCDT19, HDAC1 and HSPA2. Component of a histone deacetylase complex containing DNTTIP1, ZNF541, HDAC1 and HDAC2. Identified in a complex with HDAC1, HDAC2, DNTTIP1 and KCTD19.

Its subcellular location is the nucleus. In terms of biological role, transcription regulator which is essential for male fertility and for the completion of meiotic prophase in spermatocytes. Regulates progression of the pachytene stage of meiotic prophase by activating the expression of genes involved in meiosis during spermatogenesis. Maintains the repression of pre-pachytene transcriptional programs, including meiotic double-strand breaks (DSB) formation genes in pachytene spermatocytes and suppresses aberrant DSB formation after mid-pachytene, thus ensuring meiosis progression. This chain is Zinc finger protein 541 (ZNF541), found in Homo sapiens (Human).